Here is a 148-residue protein sequence, read N- to C-terminus: 3-dehydroquinate dehydratase (148 aa).

Y24 serves as the catalytic Proton acceptor. N80, H86, and D93 together coordinate substrate. The Proton donor role is filled by H106. Substrate-binding positions include 107–108 and R117; that span reads IS.

Belongs to the type-II 3-dehydroquinase family. Homododecamer.

The enzyme catalyses 3-dehydroquinate = 3-dehydroshikimate + H2O. It functions in the pathway metabolic intermediate biosynthesis; chorismate biosynthesis; chorismate from D-erythrose 4-phosphate and phosphoenolpyruvate: step 3/7. Its function is as follows. Catalyzes a trans-dehydration via an enolate intermediate. This Acidovorax ebreus (strain TPSY) (Diaphorobacter sp. (strain TPSY)) protein is 3-dehydroquinate dehydratase.